The primary structure comprises 689 residues: Glycine--tRNA ligase beta subunit (689 aa).

Belongs to the class-II aminoacyl-tRNA synthetase family. Tetramer of two alpha and two beta subunits.

It is found in the cytoplasm. It catalyses the reaction tRNA(Gly) + glycine + ATP = glycyl-tRNA(Gly) + AMP + diphosphate. This is Glycine--tRNA ligase beta subunit from Lacticaseibacillus casei (strain BL23) (Lactobacillus casei).